We begin with the raw amino-acid sequence, 152 residues long: MFRGASAVNLDSKGRIAIPTRYRPEILEINQGQMVCTVDIRQPCLLLYPLNQWEIIEQKLSKLSNFNPEERSLQRVMLGYATECELDSAGRILISAPLRQHAKLEKSIMLVGQLNKFEIWSESEWQAQIEKDMTLGASGQFAMSEALSMLSL.

2 SpoVT-AbrB domains span residues 5–52 and 81–124; these read ASAV…PLNQ and ATEC…SESE.

This sequence belongs to the MraZ family. Forms oligomers.

It localises to the cytoplasm. Its subcellular location is the nucleoid. This Histophilus somni (strain 2336) (Haemophilus somnus) protein is Transcriptional regulator MraZ.